Reading from the N-terminus, the 187-residue chain is Large ribosomal subunit protein uL18 (187 aa).

It belongs to the universal ribosomal protein uL18 family. In terms of assembly, part of the 50S ribosomal subunit. Interacts with proteins L5 and L21e, and attaches the 5S rRNA to the 23S rRNA. Has been cross-linked to L21e.

Functionally, this is one of 5 proteins that mediate the attachment of the 5S rRNA onto the large ribosomal subunit, where it forms part of the central protuberance and stabilizes the orientation of adjacent RNA domains. This Haloarcula marismortui (strain ATCC 43049 / DSM 3752 / JCM 8966 / VKM B-1809) (Halobacterium marismortui) protein is Large ribosomal subunit protein uL18 (rpl18).